A 202-amino-acid polypeptide reads, in one-letter code: GTP-binding protein rho1 (202 aa).

Residue Gly-13–Thr-20 coordinates GTP. Positions Tyr-35 to Tyr-43 match the Effector region motif. GTP contacts are provided by residues Asp-60 to Gln-64 and Cys-118 to Asp-121. Cys-199 carries the post-translational modification Cysteine methyl ester. Cys-199 carries the S-geranylgeranyl cysteine lipid modification. A propeptide spans Ile-200 to Leu-202 (removed in mature form).

Belongs to the small GTPase superfamily. Rho family.

The protein localises to the cell membrane. Involved in the regulation of cell wall growth and actin cytoskeleton organization. Activates (1,3)-beta-D-glucan synthase. The polypeptide is GTP-binding protein rho1 (rho1) (Schizosaccharomyces pombe (strain 972 / ATCC 24843) (Fission yeast)).